Consider the following 787-residue polypeptide: MANILRKWVESDKREIARLGKIADKVQQYEDEYAALSDEQLKANTPKLKDRLAAGATLDDILPEAFATAREGAKRVLGLFPFRVQIIGGIVLHEGNIAEMKTGEGKTLTATMPVYLNALTGKGVHVVTVNEYLSTRDATEMGELYNWLGLSVGLNLNSKNSDEKREAYNCDITYSTNSELGFDYLRDNMVVYKEQMVQRPLNFAIVDEVDSILIDEARTPLIISGGAEKTTGLYIRADRFVKTLKAETDYKIDWPTKTISLTESGIRKAEKNFGLDNLYDTENTALTHHIDQALRANYIMLKDIDYMVSDGEVLIVDQFTGRAMEGRRYSDGLHQAIEAKEGVQIQDENKTMANITYQNFFRMYTKLAGMTGTAKTEQEEFREIYNMEVISVPTNKPVIRVDSPDVLYPTLDAKFNAVVEDIKARHEKGQPMLIGTVAIESSERLSKQLDEAKIPHTVLNAKNHFKEAEIIMNAGQRGAVTIATNMAGRGTDIKLGPGVTELGGLAVIGTERHESRRIDNQLRGRSGRQGDPGSTQFYLSLEDDLMKRFGSDRIKAMLDRFKVADDDQVIQSRMISRQVESAQKRVEGNNYDTRKNTLQYDDVMREQREVIYKQRQQVINEQETLKPVLMAMINRTITRIVQTHTQGDQKDWNLDALYAWVTANMIDPEKFKRSQLDGKSQDELIGLLAEMAETNFQQKNKQLGDDAQMLEFEKVVILRVVDSAWTDHIDAMDQLRQSIGLRGYGQMNPLVEYQEEGYRMFEEMIASIDDDVTRLFMKAEIRQNIRR.

ATP contacts are provided by residues Gln85, 103-107, and Asp492; that span reads GEGKT.

The protein belongs to the SecA family. Monomer and homodimer. Part of the essential Sec protein translocation apparatus which comprises SecA, SecYEG and auxiliary proteins SecDF. Other proteins may also be involved.

It is found in the cell membrane. The protein resides in the cytoplasm. It catalyses the reaction ATP + H2O + cellular proteinSide 1 = ADP + phosphate + cellular proteinSide 2.. Functionally, part of the Sec protein translocase complex. Interacts with the SecYEG preprotein conducting channel. Has a central role in coupling the hydrolysis of ATP to the transfer of proteins into and across the cell membrane, serving as an ATP-driven molecular motor driving the stepwise translocation of polypeptide chains across the membrane. The chain is Protein translocase subunit SecA from Lacticaseibacillus casei (strain BL23) (Lactobacillus casei).